Reading from the N-terminus, the 618-residue chain is UvrABC system protein C (618 aa).

One can recognise a GIY-YIG domain in the interval 13 to 92; it reads DKPGVYLMKN…IKKYRPKYNI (80 aa). The UVR domain maps to 204 to 239; sequence LDIVENFKLNMEKAAENLEFEKAAMLRDKINIIEKI.

This sequence belongs to the UvrC family. In terms of assembly, interacts with UvrB in an incision complex.

It is found in the cytoplasm. Its function is as follows. The UvrABC repair system catalyzes the recognition and processing of DNA lesions. UvrC both incises the 5' and 3' sides of the lesion. The N-terminal half is responsible for the 3' incision and the C-terminal half is responsible for the 5' incision. The protein is UvrABC system protein C of Clostridium botulinum (strain Okra / Type B1).